The primary structure comprises 204 residues: Small ribosomal subunit protein uS4 (204 aa).

In terms of domain architecture, S4 RNA-binding spans 92 to 156 (RRLDALVLRS…SKVPFQVARE (65 aa)).

This sequence belongs to the universal ribosomal protein uS4 family. As to quaternary structure, part of the 30S ribosomal subunit. Contacts protein S5. The interaction surface between S4 and S5 is involved in control of translational fidelity.

Its function is as follows. One of the primary rRNA binding proteins, it binds directly to 16S rRNA where it nucleates assembly of the body of the 30S subunit. With S5 and S12 plays an important role in translational accuracy. This is Small ribosomal subunit protein uS4 from Streptomyces griseus subsp. griseus (strain JCM 4626 / CBS 651.72 / NBRC 13350 / KCC S-0626 / ISP 5235).